A 680-amino-acid chain; its full sequence is Galactose oxidase (680 aa).

The N-terminal stretch at 1 to 24 (MKHFLSLALCFSSINAVAVTVPHK) is a signal peptide. Residues 25–41 (SGGTGSPEGSLQFLSLR) constitute a propeptide that is removed on maturation. Residues 42–189 (ASAPIGSAIS…SIAEINVFQA (148 aa)) form the F5/8 type C domain. A disulfide bridge connects residues Cys59 and Cys68. Kelch repeat units follow at residues 223-268 (RVLM…HDMF), 279-321 (QIVV…TMSD), 323-372 (RVFT…LYRS), 436-490 (KILT…VLPD), and 492-544 (STFI…LLLP). Positions 269 to 313 (CPGISMDGNGQIVVTGGNDAKKTSLYDSSSDSWIPGPDMQVARGY) form a cross-link, 3'-(S-cysteinyl)-tyrosine (Cys-Tyr). A Cu cation-binding site is contributed by Tyr313. 2 residues coordinate Cu cation: Tyr536 and His537. Tyr536 functions as the Proton acceptor in the catalytic mechanism. An intrachain disulfide couples Cys556 to Cys559. His622 provides a ligand contact to Cu cation.

As to quaternary structure, monomer. The cofactor is Cu(2+). Galactose oxidase contains a protein-derived free radical cofactor. In the active state, Tyr-313, which is cross-linked to Cys-269 via a thioether bond, is oxidized to a radical and acts with Cu(2+) as a two-electron acceptor in the oxidation reaction. The cross-link is believed to modulate the redox potential of the tyrosyl radical, which is further stabilized by a stacking interaction with Trp-331 in the active site. The post-translational formation of the cross-link is closely linked to the propeptide cleavage event, and both are copper-dependent, autocatalytic processes. The propeptide may act as an intramolecular chaperone, facilitating thioester bond formation and copper binding by positioning of active-site residues, including copper ligands.

The protein localises to the secreted. It carries out the reaction D-galactose + O2 = D-galacto-hexodialdose + H2O2. In terms of biological role, catalyzes the sterospecific oxidation of primary alcohols to the corresponding aldehydes. The biologically relevant substrate of the enzyme is not known as the enzyme exhibits broad substrate specificity from small alcohols through sugars to oligo- and polysaccharides. This is Galactose oxidase (GAOA) from Gibberella zeae (strain ATCC MYA-4620 / CBS 123657 / FGSC 9075 / NRRL 31084 / PH-1) (Wheat head blight fungus).